The following is a 317-amino-acid chain: sn-1-specific diacylglycerol lipase ABHD11 (317 aa).

A mitochondrion-targeting transit peptide spans 1-20; the sequence is MSNFAMSALCRVFTRGAPCG. The AB hydrolase-1 domain occupies 69 to 304; it reads PLVFLHGLFG…ASHWIHADKP (236 aa). Active-site charge relay system residues include Ser142, Glu238, and His297.

It belongs to the AB hydrolase superfamily. Post-translationally, phosphorylated.

Its subcellular location is the mitochondrion. It is found in the mitochondrion matrix. It carries out the reaction 1-octadecanoyl-2-(5Z,8Z,11Z,14Z-eicosatetraenoyl)-sn-glycerol + H2O = 2-(5Z,8Z,11Z,14Z-eicosatetraenoyl)-glycerol + octadecanoate + H(+). The catalysed reaction is a 1,2-diacyl-sn-glycerol + H2O = a 2-acylglycerol + a fatty acid + H(+). It catalyses the reaction a 1,3-diacyl-sn-glycerol + H2O = a 1-acyl-sn-glycerol + a fatty acid + H(+). The enzyme catalyses 1-octadecanoyl-2-(9Z-octadecenoyl)-sn-glycerol + H2O = 2-(9Z-octadecenoyl)-glycerol + octadecanoate + H(+). It carries out the reaction 1-octadecanoyl-2-(4Z,7Z,10Z,13Z,16Z,19Z-docosahexaenoyl)-sn-glycerol + H2O = 2-(4Z,7Z,10Z,13Z,16Z,19Z-docosahexaenoyl)-glycerol + octadecanoate + H(+). The catalysed reaction is 1,2-didecanoylglycerol + H2O = decanoylglycerol + decanoate + H(+). Its function is as follows. Catalyzes the hydrolysis of diacylglycerol in vitro and may function as a key regulator in lipid metabolism, namely by regulating the intracellular levels of diacylglycerol. 1,2-diacyl-sn-glycerols are the preferred substrate over 1,3-diacyl-sn-glycerols. The enzyme hydrolyzes stearate in preference to palmitate from the sn-1 position of 1,2-diacyl-sn-glycerols. The chain is sn-1-specific diacylglycerol lipase ABHD11 from Danio rerio (Zebrafish).